The primary structure comprises 431 residues: Enolase (431 aa).

Residue glutamine 168 coordinates (2R)-2-phosphoglycerate. Catalysis depends on glutamate 210, which acts as the Proton donor. The Mg(2+) site is built by aspartate 247, glutamate 291, and aspartate 318. The (2R)-2-phosphoglycerate site is built by lysine 343, arginine 372, serine 373, and lysine 394. Residue lysine 343 is the Proton acceptor of the active site.

The protein belongs to the enolase family. Component of the RNA degradosome, a multiprotein complex involved in RNA processing and mRNA degradation. It depends on Mg(2+) as a cofactor.

The protein resides in the cytoplasm. The protein localises to the secreted. It is found in the cell surface. The catalysed reaction is (2R)-2-phosphoglycerate = phosphoenolpyruvate + H2O. Its pathway is carbohydrate degradation; glycolysis; pyruvate from D-glyceraldehyde 3-phosphate: step 4/5. In terms of biological role, catalyzes the reversible conversion of 2-phosphoglycerate (2-PG) into phosphoenolpyruvate (PEP). It is essential for the degradation of carbohydrates via glycolysis. The chain is Enolase from Acinetobacter baylyi (strain ATCC 33305 / BD413 / ADP1).